Reading from the N-terminus, the 341-residue chain is Ferredoxin--NADP reductase (341 aa).

FAD is bound by residues D38, Q46, Y51, V91, F125, D292, and T333.

It belongs to the ferredoxin--NADP reductase type 2 family. As to quaternary structure, homodimer. FAD serves as cofactor.

It catalyses the reaction 2 reduced [2Fe-2S]-[ferredoxin] + NADP(+) + H(+) = 2 oxidized [2Fe-2S]-[ferredoxin] + NADPH. This is Ferredoxin--NADP reductase from Gluconacetobacter diazotrophicus (strain ATCC 49037 / DSM 5601 / CCUG 37298 / CIP 103539 / LMG 7603 / PAl5).